The sequence spans 559 residues: Cytochrome P450 86B1 (559 aa).

A helical transmembrane segment spans residues 31 to 51 (FLLRDVQILELLIAIFVFVAI). Residue Cys-488 coordinates heme.

It belongs to the cytochrome P450 family. Requires heme as cofactor. In terms of tissue distribution, expressed in roots endodermis, anthers, stigmas, stomata of young pedicels of inflorescences, the placenta region of siliques, at the level of the hilum in matures seeds, at the junction of siliques to pedicels where abscission of floral parts takes place and in nectary glands.

Its subcellular location is the endoplasmic reticulum membrane. In terms of biological role, involved in very long chain fatty acids (VLCFA) omega-hydroxylation. Required for the synthesis of saturated VLCFA alpha, omega-bifunctional suberin monomers. The chain is Cytochrome P450 86B1 (CYP86B1) from Arabidopsis thaliana (Mouse-ear cress).